The primary structure comprises 622 residues: Probable Xaa-Pro aminopeptidase P (622 aa).

Mn(2+)-binding residues include D419, D430, E528, and E542.

This sequence belongs to the peptidase M24B family. It depends on Mn(2+) as a cofactor.

It carries out the reaction Release of any N-terminal amino acid, including proline, that is linked to proline, even from a dipeptide or tripeptide.. Functionally, catalyzes the removal of a penultimate prolyl residue from the N-termini of peptides. This is Probable Xaa-Pro aminopeptidase P (AMPP) from Coprinopsis cinerea (strain Okayama-7 / 130 / ATCC MYA-4618 / FGSC 9003) (Inky cap fungus).